The primary structure comprises 146 residues: Calmodulin-like protein 5 (146 aa).

N-acetylalanine is present on alanine 2. EF-hand domains follow at residues glutamate 8 to asparagine 43, leucine 44 to lysine 74, alanine 78 to proline 113, and leucine 114 to glutamate 146. Positions 21, 23, 25, 27, 32, 57, 59, 61, 63, 68, 91, 93, 95, 97, 102, 127, 129, 131, 133, and 138 each coordinate Ca(2+).

In terms of assembly, associates with transglutaminase 3. In terms of tissue distribution, particularly abundant in the epidermis where its expression is directly related to keratinocyte differentiation. Very low expression in lung.

Its function is as follows. Binds calcium. May be involved in terminal differentiation of keratinocytes. The chain is Calmodulin-like protein 5 (CALML5) from Homo sapiens (Human).